A 655-amino-acid polypeptide reads, in one-letter code: SRSF protein kinase 1 (655 aa).

Residues 1–57 are disordered; the sequence is MERKVLALQARKKRTKAKKDKAQRKPETQHRGSAPHSESDLPEQEEEILGSDDDEQE. Over residues 10-22 the composition is skewed to basic residues; sequence ARKKRTKAKKDKA. The span at 40–57 shows a compositional bias: acidic residues; the sequence is DLPEQEEEILGSDDDEQE. A Phosphoserine; by CK2 modification is found at Ser51. A Protein kinase domain is found at 80–653; that stretch reads YHVIRKLGWG…AAECLRHPWL (574 aa). ATP is bound by residues 86–94 and Lys109; that span reads LGWGHFSTV. The Proton acceptor role is filled by Asp213. Disordered stretches follow at residues 238-341 and 397-417; these read WQRS…QDQT and FLSSQNGDSSTSQETDSCTPI. Positions 265–276 are enriched in basic residues; sequence KNKKKKLKKKQK. 2 stretches are compositionally biased toward basic and acidic residues: residues 277–288 and 304–318; these read RQAELLEKRMQE and NKQEESESPVERPLK. Phosphoserine occurs at positions 309, 311, and 333. Position 555 is a phosphoserine; by CK2 (Ser555).

The protein belongs to the protein kinase superfamily. CMGC Ser/Thr protein kinase family. As to quaternary structure, monomer. Found in a multisubunit complex containing seven proteins, named toposome, which separates entangled circular chromatin DNA during chromosome segregation. Interacts with HHV-1 ICP27 protein. Interacts with DNAJC8 and AHSA1/AHA1 and this mediates formation of a complex with the Hsp70 /Hsp90 machinery. Binds to IGF2BP1, SYNCRIP, HNRNPA2B1 and HNRNPC. Interacts with SAFB/SAFB1 and SAFB2 which inhibits its activity. Requires Mg(2+) as cofactor.

The protein resides in the cytoplasm. It localises to the nucleus. The protein localises to the nucleoplasm. Its subcellular location is the nucleus matrix. It is found in the microsome. The protein resides in the nucleus speckle. It localises to the chromosome. The enzyme catalyses L-seryl-[protein] + ATP = O-phospho-L-seryl-[protein] + ADP + H(+). It catalyses the reaction L-threonyl-[protein] + ATP = O-phospho-L-threonyl-[protein] + ADP + H(+). Its activity is regulated as follows. Activated by phosphorylation on Ser-51 and Ser-555. Its function is as follows. Serine/arginine-rich protein-specific kinase which specifically phosphorylates its substrates at serine residues located in regions rich in arginine/serine dipeptides, known as RS domains and is involved in the phosphorylation of SR splicing factors and the regulation of splicing. Plays a central role in the regulatory network for splicing, controlling the intranuclear distribution of splicing factors in interphase cells and the reorganization of nuclear speckles during mitosis. Can influence additional steps of mRNA maturation, as well as other cellular activities, such as chromatin reorganization in somatic and sperm cells and cell cycle progression. Phosphorylates SFRS2, ZRSR2, LBR and PRM1. Phosphorylates SRSF1 using a directional (C-terminal to N-terminal) and a dual-track mechanism incorporating both processive phosphorylation (in which the kinase stays attached to the substrate after each round of phosphorylation) and distributive phosphorylation steps (in which the kinase and substrate dissociate after each phosphorylation event). The RS domain of SRSF1 binds first to a docking groove in the large lobe of the kinase domain of SRPK1. This induces certain structural changes in SRPK1 and/or RRM2 domain of SRSF1, allowing RRM2 to bind the kinase and initiate phosphorylation. The cycles continue for several phosphorylation steps in a processive manner (steps 1-8) until the last few phosphorylation steps (approximately steps 9-12). During that time, a mechanical stress induces the unfolding of the beta-4 motif in RRM2, which then docks at the docking groove of SRPK1. This also signals RRM2 to begin to dissociate, which facilitates SRSF1 dissociation after phosphorylation is completed. Can mediate hepatitis B virus (HBV) core protein phosphorylation. It plays a negative role in the regulation of HBV replication through a mechanism not involving the phosphorylation of the core protein but by reducing the packaging efficiency of the pregenomic RNA (pgRNA) without affecting the formation of the viral core particles. Can induce splicing of exon 10 in MAPT/TAU. The sequence is that of SRSF protein kinase 1 from Pongo abelii (Sumatran orangutan).